A 344-amino-acid polypeptide reads, in one-letter code: N-acetyl-gamma-glutamyl-phosphate reductase (344 aa).

Cys149 is an active-site residue.

The protein belongs to the NAGSA dehydrogenase family. Type 1 subfamily.

Its subcellular location is the cytoplasm. The enzyme catalyses N-acetyl-L-glutamate 5-semialdehyde + phosphate + NADP(+) = N-acetyl-L-glutamyl 5-phosphate + NADPH + H(+). The protein operates within amino-acid biosynthesis; L-arginine biosynthesis; N(2)-acetyl-L-ornithine from L-glutamate: step 3/4. In terms of biological role, catalyzes the NADPH-dependent reduction of N-acetyl-5-glutamyl phosphate to yield N-acetyl-L-glutamate 5-semialdehyde. This is N-acetyl-gamma-glutamyl-phosphate reductase from Thermoanaerobacter sp. (strain X514).